The following is a 647-amino-acid chain: Leishmanolysin-like peptidase (647 aa).

Residue histidine 264 participates in Zn(2+) binding. Residue glutamate 265 is part of the active site. Zn(2+) contacts are provided by histidine 268 and histidine 370.

The protein belongs to the peptidase M8 family. Zn(2+) is required as a cofactor. As to expression, expressed in all cell lines analyzed.

It localises to the cytoplasm. The protein localises to the lipid droplet. Functionally, metalloprotease. In Homo sapiens (Human), this protein is Leishmanolysin-like peptidase (LMLN).